Reading from the N-terminus, the 349-residue chain is MYISNLRLQNFRNIPAKSFDFKNSINFIVGKNGSGKTSILESIYFLSHSRSFRSSQLNRIINHNADEFIIYTKAYNPDEITISLSRKKNSNNISKLNLEIQKNHTEITRNLPIQLINPESFNIINSGAQQRCKVLDWGAFYLDKTFLKIWQQTKFLVKQRNSALKQNYPYSYILSIDKKLCEFAEILDYKRHAYFTKLKPKIYEILSHFNPNLQLDIDYFRGWNLHKSLAQVLEESFNYDNKYKVTNHGPHKADIVLSVSHKPIQDIFSRGQQKLLICALKLAQGEIHNSENDNKCIYLIDDITSELDSIHTLTLFNYLKQLKSQVFITTTEKNKINEFIDTNSYILEI.

Gly-30–Thr-37 lines the ATP pocket.

It belongs to the RecF family.

It localises to the cytoplasm. Functionally, the RecF protein is involved in DNA metabolism; it is required for DNA replication and normal SOS inducibility. RecF binds preferentially to single-stranded, linear DNA. It also seems to bind ATP. The sequence is that of DNA replication and repair protein RecF from Francisella tularensis subsp. novicida (strain U112).